A 555-amino-acid polypeptide reads, in one-letter code: Membrane protein insertase YidC (555 aa).

5 helical membrane passes run 7-24 (VLWV…DNWQ), 367-387 (WGWS…PLSA), 437-457 (LPVV…LASV), 476-496 (PFFI…SLNP), and 511-531 (PIAF…YYVV).

This sequence belongs to the OXA1/ALB3/YidC family. Type 1 subfamily. In terms of assembly, interacts with the Sec translocase complex via SecD. Specifically interacts with transmembrane segments of nascent integral membrane proteins during membrane integration.

The protein resides in the cell inner membrane. In terms of biological role, required for the insertion and/or proper folding and/or complex formation of integral membrane proteins into the membrane. Involved in integration of membrane proteins that insert both dependently and independently of the Sec translocase complex, as well as at least some lipoproteins. Aids folding of multispanning membrane proteins. In Burkholderia lata (strain ATCC 17760 / DSM 23089 / LMG 22485 / NCIMB 9086 / R18194 / 383), this protein is Membrane protein insertase YidC.